A 429-amino-acid chain; its full sequence is Adenylosuccinate synthetase (429 aa).

GTP contacts are provided by residues 12 to 18 (GDEGKGK) and 40 to 42 (GHT). Asp-13 functions as the Proton acceptor in the catalytic mechanism. Positions 13 and 40 each coordinate Mg(2+). Residues 13–16 (DEGK), 38–41 (NAGH), Thr-128, Arg-142, Gln-223, Thr-238, and Arg-302 each bind IMP. His-41 serves as the catalytic Proton donor. 298–304 (VNTGRPR) serves as a coordination point for substrate. GTP is bound by residues Arg-304, 330 to 332 (KLD), and 412 to 414 (GVG).

Belongs to the adenylosuccinate synthetase family. Homodimer. Mg(2+) serves as cofactor.

The protein localises to the cytoplasm. The catalysed reaction is IMP + L-aspartate + GTP = N(6)-(1,2-dicarboxyethyl)-AMP + GDP + phosphate + 2 H(+). The protein operates within purine metabolism; AMP biosynthesis via de novo pathway; AMP from IMP: step 1/2. In terms of biological role, plays an important role in the de novo pathway of purine nucleotide biosynthesis. Catalyzes the first committed step in the biosynthesis of AMP from IMP. The polypeptide is Adenylosuccinate synthetase (Corynebacterium urealyticum (strain ATCC 43042 / DSM 7109)).